The chain runs to 469 residues: ATP-dependent protease ATPase subunit HslU (469 aa).

Residues Ile24, Gly66–Glu71, Asp282, Glu347, and Arg419 contribute to the ATP site.

Belongs to the ClpX chaperone family. HslU subfamily. A double ring-shaped homohexamer of HslV is capped on each side by a ring-shaped HslU homohexamer. The assembly of the HslU/HslV complex is dependent on binding of ATP.

It localises to the cytoplasm. Functionally, ATPase subunit of a proteasome-like degradation complex; this subunit has chaperone activity. The binding of ATP and its subsequent hydrolysis by HslU are essential for unfolding of protein substrates subsequently hydrolyzed by HslV. HslU recognizes the N-terminal part of its protein substrates and unfolds these before they are guided to HslV for hydrolysis. This is ATP-dependent protease ATPase subunit HslU from Listeria monocytogenes serotype 4a (strain HCC23).